A 177-amino-acid polypeptide reads, in one-letter code: MRKKRAGRPQHCRCVQDLPKVTCFTPSGVAPEAVEQVLMTVDELEAMRLADRDGLYHADAAMQMKVSRPTFGRILESGRRKVADALVGGKQICIKGGTVLAVCDSIPTERPDICLCPTCGREFPHIKGVPCRNSICPDCNEPLQRKGGCLSDEESDEQENEQRTVGYPESEEELEIE.

The tract at residues G147–E177 is disordered.

It belongs to the UPF0251 family.

This is UPF0251 protein Cag_0886 from Chlorobium chlorochromatii (strain CaD3).